A 1241-amino-acid polypeptide reads, in one-letter code: Phosphorylase b kinase regulatory subunit alpha, skeletal muscle isoform (1241 aa).

Residues S629, S730, S736, S739, S759, S812, S973, S982, and S986 each carry the phosphoserine modification. The tract at residues 811–841 (LSELYVKVGEIRHWGLIRYISGILRKKVEAL) is calmodulin-binding. Position 1008 is a phosphoserine; by autocatalysis (S1008). Residue S1019 is modified to Phosphoserine; by PKA. S1021 and S1024 each carry phosphoserine. A calmodulin-binding region spans residues 1064–1104 (SKDSRQGQWQRRRRLDGALNRVPIGFYQKVWKILQKCHGLS). S1131 carries the post-translational modification Phosphoserine. A lipid anchor (S-farnesyl cysteine) is attached at C1238.

This sequence belongs to the phosphorylase b kinase regulatory chain family. In terms of assembly, hexadecamer of 4 heterotetramers, each composed of alpha, beta, gamma, and delta subunits. Alpha (PHKA1 or PHKA2) and beta (PHKB) are regulatory subunits, gamma (PHKG1 or PHKG2) is the catalytic subunit, and delta is calmodulin. Although the final Cys may be farnesylated, the terminal tripeptide is probably not removed, and the C-terminus is not methylated. In terms of tissue distribution, both isoforms are expressed in muscle.

The protein localises to the cell membrane. The protein operates within glycan biosynthesis; glycogen metabolism. With respect to regulation, by phosphorylation of various serine residues and by calcium. Its function is as follows. Phosphorylase b kinase catalyzes the phosphorylation of serine in certain substrates, including troponin I. The alpha chain may bind calmodulin. In Mus musculus (Mouse), this protein is Phosphorylase b kinase regulatory subunit alpha, skeletal muscle isoform (Phka1).